The primary structure comprises 267 residues: Thiamine pyrophosphokinase 2 (267 aa).

The protein belongs to the thiamine pyrophosphokinase family. In terms of tissue distribution, expressed in leaves and at lower levels in flowers.

It is found in the cytoplasm. The protein resides in the cytosol. The catalysed reaction is thiamine + ATP = thiamine diphosphate + AMP + H(+). The protein operates within cofactor biosynthesis; thiamine diphosphate biosynthesis; thiamine diphosphate from thiamine: step 1/1. Functionally, catalyzes the phosphorylation of thiamine to thiamine pyrophosphate (TPP). TPP is an active cofactor for enzymes involved in glycolysis and energy production. Plant leaves require high levels of TPP for photosynthesis and carbohydrate metabolism. The sequence is that of Thiamine pyrophosphokinase 2 from Arabidopsis thaliana (Mouse-ear cress).